A 77-amino-acid chain; its full sequence is Anionic peptide 17.1 (77 aa).

Positions 1–24 (MASKTVLVLLLVSVLVSTFCTAKA) are cleaved as a signal peptide.

The protein belongs to the non-disulfide-bridged peptide (NDBP) superfamily. Long chain multifunctional peptide (group 2) family. Expressed by the venom gland.

Its subcellular location is the secreted. The protein is Anionic peptide 17.1 of Lychas mucronatus (Chinese swimming scorpion).